A 303-amino-acid chain; its full sequence is Cytochrome c oxidase subunit 2 (303 aa).

The first 25 residues, 1–25 (MRHSTTLTGCATGAAGLLAATAAAA), serve as a signal peptide directing secretion. The next 2 helical transmembrane spans lie at 60–80 (FILV…LYAV) and 104–124 (WTIV…PVLF). Residues His-217, Cys-252, Cys-256, and His-260 each coordinate Cu cation.

It belongs to the cytochrome c oxidase subunit 2 family. It depends on Cu cation as a cofactor.

It localises to the cell membrane. It catalyses the reaction 4 Fe(II)-[cytochrome c] + O2 + 8 H(+)(in) = 4 Fe(III)-[cytochrome c] + 2 H2O + 4 H(+)(out). Its function is as follows. Subunits I and II form the functional core of the enzyme complex. Electrons originating in cytochrome c are transferred via heme a and Cu(A) to the binuclear center formed by heme a3 and Cu(B). The polypeptide is Cytochrome c oxidase subunit 2 (ctaC) (Cereibacter sphaeroides (Rhodobacter sphaeroides)).